We begin with the raw amino-acid sequence, 417 residues long: Serine protease hepsin (417 aa).

Over 1 to 23 (MAQKEGGRTVPCCSRPKVAALTA) the chain is Cytoplasmic. The helical; Signal-anchor for type II membrane protein transmembrane segment at 24–44 (GTLLLLTAIGAASWAIVAVLL) threads the bilayer. Topologically, residues 45–417 (RSDQEPLYPV…SEASGMVTQL (373 aa)) are extracellular. An SRCR domain is found at 54–151 (VQVSSADARL…RGRFLAAICQ (98 aa)). 8 cysteine pairs are disulfide-bonded: cysteine 77–cysteine 140, cysteine 90–cysteine 150, cysteine 119–cysteine 138, cysteine 153–cysteine 277, cysteine 188–cysteine 204, cysteine 291–cysteine 359, cysteine 322–cysteine 338, and cysteine 349–cysteine 381. The N-linked (GlcNAc...) asparagine glycan is linked to asparagine 112. Residues 163 to 405 (IVGGRDTSLG…FREWIFQAIK (243 aa)) enclose the Peptidase S1 domain. Residues histidine 203 and aspartate 257 each act as charge relay system in the active site. Serine 353 acts as the Charge relay system in catalysis.

Belongs to the peptidase S1 family. Detected in liver and kidney.

It is found in the cell membrane. The protein localises to the apical cell membrane. The catalysed reaction is Cleavage after basic amino-acid residues, with Arg strongly preferred to Lys.. Its function is as follows. Serine protease that cleaves extracellular substrates, and contributes to the proteolytic processing of growth factors, such as HGF and MST1/HGFL. Plays a role in cell growth and maintenance of cell morphology. Plays a role in the proteolytic processing of ACE2. Mediates the proteolytic cleavage of urinary UMOD that is required for UMOD polymerization. In Homo sapiens (Human), this protein is Serine protease hepsin (HPN).